The chain runs to 476 residues: Aspartyl/glutamyl-tRNA(Asn/Gln) amidotransferase subunit B (476 aa).

The protein belongs to the GatB/GatE family. GatB subfamily. As to quaternary structure, heterotrimer of A, B and C subunits.

It catalyses the reaction L-glutamyl-tRNA(Gln) + L-glutamine + ATP + H2O = L-glutaminyl-tRNA(Gln) + L-glutamate + ADP + phosphate + H(+). It carries out the reaction L-aspartyl-tRNA(Asn) + L-glutamine + ATP + H2O = L-asparaginyl-tRNA(Asn) + L-glutamate + ADP + phosphate + 2 H(+). Allows the formation of correctly charged Asn-tRNA(Asn) or Gln-tRNA(Gln) through the transamidation of misacylated Asp-tRNA(Asn) or Glu-tRNA(Gln) in organisms which lack either or both of asparaginyl-tRNA or glutaminyl-tRNA synthetases. The reaction takes place in the presence of glutamine and ATP through an activated phospho-Asp-tRNA(Asn) or phospho-Glu-tRNA(Gln). In Lactobacillus delbrueckii subsp. bulgaricus (strain ATCC 11842 / DSM 20081 / BCRC 10696 / JCM 1002 / NBRC 13953 / NCIMB 11778 / NCTC 12712 / WDCM 00102 / Lb 14), this protein is Aspartyl/glutamyl-tRNA(Asn/Gln) amidotransferase subunit B.